A 177-amino-acid polypeptide reads, in one-letter code: Large ribosomal subunit protein uL30 (177 aa).

It belongs to the universal ribosomal protein uL30 family. In terms of assembly, part of the 50S ribosomal subunit.

This Pyrobaculum islandicum (strain DSM 4184 / JCM 9189 / GEO3) protein is Large ribosomal subunit protein uL30.